The sequence spans 228 residues: HTH-type transcriptional regulator ArcR (228 aa).

Residue 22 to 141 (SYINIPVGVL…VKLFSLLSET (120 aa)) participates in a nucleoside 3',5'-cyclic phosphate binding. The 74-residue stretch at 155–228 (KLAKERVTKI…SKNWLVSKDL (74 aa)) folds into the HTH crp-type domain. Positions 188 to 207 (IQLLSDMAGISRETTSHIIN) form a DNA-binding region, H-T-H motif.

The protein localises to the cytoplasm. In terms of biological role, positively regulates the expression of the arcABDCR operon under anaerobic conditions, thus playing an essential role in arginine catabolism. May also control the expression of genes encoding proteins which are involved in anaerobic metabolism. Can bind cyclic AMP. This Staphylococcus epidermidis (strain ATCC 12228 / FDA PCI 1200) protein is HTH-type transcriptional regulator ArcR (arcR).